The chain runs to 331 residues: DNA-directed RNA polymerase subunit alpha (331 aa).

The segment at 1–237 (MQSFEKEFLK…DQLSSFIDLK (237 aa)) is alpha N-terminal domain (alpha-NTD). The interval 251-331 (FDPSLLNLVD…NWPPKHLSEQ (81 aa)) is alpha C-terminal domain (alpha-CTD).

This sequence belongs to the RNA polymerase alpha chain family. In terms of assembly, homodimer. The RNAP catalytic core consists of 2 alpha, 1 beta, 1 beta' and 1 omega subunit. When a sigma factor is associated with the core the holoenzyme is formed, which can initiate transcription.

The enzyme catalyses RNA(n) + a ribonucleoside 5'-triphosphate = RNA(n+1) + diphosphate. Its function is as follows. DNA-dependent RNA polymerase catalyzes the transcription of DNA into RNA using the four ribonucleoside triphosphates as substrates. The polypeptide is DNA-directed RNA polymerase subunit alpha (Blochmanniella floridana).